Consider the following 202-residue polypeptide: Imidazoleglycerol-phosphate dehydratase (202 aa).

This sequence belongs to the imidazoleglycerol-phosphate dehydratase family.

Its subcellular location is the cytoplasm. It carries out the reaction D-erythro-1-(imidazol-4-yl)glycerol 3-phosphate = 3-(imidazol-4-yl)-2-oxopropyl phosphate + H2O. It functions in the pathway amino-acid biosynthesis; L-histidine biosynthesis; L-histidine from 5-phospho-alpha-D-ribose 1-diphosphate: step 6/9. This Rhizobium etli (strain CIAT 652) protein is Imidazoleglycerol-phosphate dehydratase.